Consider the following 199-residue polypeptide: COMM domain-containing protein 2 (199 aa).

The region spanning 123–190 (SYHNLEWRLD…QALEEMKTNH (68 aa)) is the COMM domain.

This sequence belongs to the COMM domain-containing protein 2 family. Component of the commander complex consisting of the CCC subcomplex and the retriever subcomplex. Component of the CCC (COMMD/CCDC22/CCDC93) subcomplex consisting of COMMD1, COMMD2, COMMD3, COMMD4, COMMD5, COMMD6, COMMD7, COMMD8, COMMD9, COMMD10, CCDC22 and CCDC93; within the complex forms a heterodimer with COMMD3. Interacts with RELA, RELB, NFKB1/p105, NFKB2/p100. Interacts with CCDC22, CCDC93, SCNN1B, CUL3, CUL4B, CUL5, CUL7. As to expression, ubiquitous.

The protein resides in the cytoplasm. Its function is as follows. Scaffold protein in the commander complex that is essential for endosomal recycling of transmembrane cargos; the commander complex is composed of the CCC subcomplex and the retriever subcomplex. May modulate activity of cullin-RING E3 ubiquitin ligase (CRL) complexes. May down-regulate activation of NF-kappa-B. This chain is COMM domain-containing protein 2 (COMMD2), found in Homo sapiens (Human).